Here is a 456-residue protein sequence, read N- to C-terminus: Bifunctional protein GlmU (456 aa).

The segment at 1-229 (MSNSSMSVVI…LSEVEGVNNR (229 aa)) is pyrophosphorylase. UDP-N-acetyl-alpha-D-glucosamine is bound by residues 11–14 (LAAG), Lys-25, Gln-76, 81–82 (GT), 103–105 (YGD), Gly-140, Glu-154, Asn-169, and Asn-227. Asp-105 provides a ligand contact to Mg(2+). Asn-227 provides a ligand contact to Mg(2+). A linker region spans residues 230–250 (LQLAALERVYQSEQAEKLLLA). Residues 251–456 (GVMLLDPARF…QGWQRPIKKK (206 aa)) form an N-acetyltransferase region. Arg-333 and Lys-351 together coordinate UDP-N-acetyl-alpha-D-glucosamine. The active-site Proton acceptor is the His-363. UDP-N-acetyl-alpha-D-glucosamine is bound by residues Tyr-366 and Asn-377. Acetyl-CoA-binding positions include Ala-380, 386–387 (NY), Ser-405, Ala-423, and Arg-440.

It in the N-terminal section; belongs to the N-acetylglucosamine-1-phosphate uridyltransferase family. This sequence in the C-terminal section; belongs to the transferase hexapeptide repeat family. Homotrimer. Mg(2+) serves as cofactor.

The protein resides in the cytoplasm. It catalyses the reaction alpha-D-glucosamine 1-phosphate + acetyl-CoA = N-acetyl-alpha-D-glucosamine 1-phosphate + CoA + H(+). The enzyme catalyses N-acetyl-alpha-D-glucosamine 1-phosphate + UTP + H(+) = UDP-N-acetyl-alpha-D-glucosamine + diphosphate. The protein operates within nucleotide-sugar biosynthesis; UDP-N-acetyl-alpha-D-glucosamine biosynthesis; N-acetyl-alpha-D-glucosamine 1-phosphate from alpha-D-glucosamine 6-phosphate (route II): step 2/2. Its pathway is nucleotide-sugar biosynthesis; UDP-N-acetyl-alpha-D-glucosamine biosynthesis; UDP-N-acetyl-alpha-D-glucosamine from N-acetyl-alpha-D-glucosamine 1-phosphate: step 1/1. It functions in the pathway bacterial outer membrane biogenesis; LPS lipid A biosynthesis. Catalyzes the last two sequential reactions in the de novo biosynthetic pathway for UDP-N-acetylglucosamine (UDP-GlcNAc). The C-terminal domain catalyzes the transfer of acetyl group from acetyl coenzyme A to glucosamine-1-phosphate (GlcN-1-P) to produce N-acetylglucosamine-1-phosphate (GlcNAc-1-P), which is converted into UDP-GlcNAc by the transfer of uridine 5-monophosphate (from uridine 5-triphosphate), a reaction catalyzed by the N-terminal domain. This chain is Bifunctional protein GlmU, found in Yersinia enterocolitica serotype O:8 / biotype 1B (strain NCTC 13174 / 8081).